A 507-amino-acid polypeptide reads, in one-letter code: Cytochrome P450 71D2 (507 aa).

2 helical membrane passes run 6–26 and 447–467; these read LPFN…LIYG and ICPG…LLLY. Position 448 (Cys448) interacts with heme.

It belongs to the cytochrome P450 family.

The protein resides in the membrane. The chain is Cytochrome P450 71D2 from Catharanthus roseus (Madagascar periwinkle).